Reading from the N-terminus, the 224-residue chain is V-type ATP synthase subunit D (224 aa).

Over residues alanine 205 to isoleucine 214 the composition is skewed to basic and acidic residues. The interval alanine 205–aspartate 224 is disordered. Residues glutamine 215–aspartate 224 are compositionally biased toward polar residues.

The protein belongs to the V-ATPase D subunit family.

In terms of biological role, produces ATP from ADP in the presence of a proton gradient across the membrane. The sequence is that of V-type ATP synthase subunit D from Deinococcus deserti (strain DSM 17065 / CIP 109153 / LMG 22923 / VCD115).